The sequence spans 499 residues: Glycerol kinase (499 aa).

Thr-13 is an ADP binding site. Residues Thr-13, Thr-14, and Ser-15 each coordinate ATP. Thr-13 is a binding site for sn-glycerol 3-phosphate. Arg-17 provides a ligand contact to ADP. Sn-glycerol 3-phosphate-binding residues include Arg-83, Glu-84, Tyr-135, and Asp-245. Positions 83, 84, 135, 245, and 246 each coordinate glycerol. 2 residues coordinate ADP: Thr-267 and Gly-310. ATP contacts are provided by Thr-267, Gly-310, Gln-314, and Gly-411. Residues Gly-411 and Asn-415 each coordinate ADP.

Belongs to the FGGY kinase family.

The enzyme catalyses glycerol + ATP = sn-glycerol 3-phosphate + ADP + H(+). It functions in the pathway polyol metabolism; glycerol degradation via glycerol kinase pathway; sn-glycerol 3-phosphate from glycerol: step 1/1. With respect to regulation, inhibited by fructose 1,6-bisphosphate (FBP). In terms of biological role, key enzyme in the regulation of glycerol uptake and metabolism. Catalyzes the phosphorylation of glycerol to yield sn-glycerol 3-phosphate. This Xanthomonas campestris pv. campestris (strain 8004) protein is Glycerol kinase.